We begin with the raw amino-acid sequence, 499 residues long: Glycerol kinase (499 aa).

Position 13 (threonine 13) interacts with ADP. The ATP site is built by threonine 13, threonine 14, and serine 15. Residue threonine 13 coordinates sn-glycerol 3-phosphate. ADP is bound at residue arginine 17. Positions 83, 84, 135, and 245 each coordinate sn-glycerol 3-phosphate. The glycerol site is built by arginine 83, glutamate 84, tyrosine 135, aspartate 245, and glutamine 246. Residues threonine 267 and glycine 310 each contribute to the ADP site. Positions 267, 310, 314, and 411 each coordinate ATP. ADP-binding residues include alanine 411 and asparagine 415.

Belongs to the FGGY kinase family.

It carries out the reaction glycerol + ATP = sn-glycerol 3-phosphate + ADP + H(+). It functions in the pathway polyol metabolism; glycerol degradation via glycerol kinase pathway; sn-glycerol 3-phosphate from glycerol: step 1/1. Its activity is regulated as follows. Inhibited by fructose 1,6-bisphosphate (FBP). Key enzyme in the regulation of glycerol uptake and metabolism. Catalyzes the phosphorylation of glycerol to yield sn-glycerol 3-phosphate. This is Glycerol kinase from Xylella fastidiosa (strain M23).